The following is a 399-amino-acid chain: Acetate kinase (399 aa).

Asparagine 7 is a Mg(2+) binding site. Lysine 14 provides a ligand contact to ATP. Arginine 91 serves as a coordination point for substrate. Aspartate 148 serves as the catalytic Proton donor/acceptor. ATP contacts are provided by residues 208–212 (HLGNG), 283–285 (DFR), and 331–335 (GLGEN). Residue glutamate 384 participates in Mg(2+) binding.

The protein belongs to the acetokinase family. In terms of assembly, homodimer. Mg(2+) is required as a cofactor. The cofactor is Mn(2+).

Its subcellular location is the cytoplasm. It catalyses the reaction acetate + ATP = acetyl phosphate + ADP. The protein operates within metabolic intermediate biosynthesis; acetyl-CoA biosynthesis; acetyl-CoA from acetate: step 1/2. In terms of biological role, catalyzes the formation of acetyl phosphate from acetate and ATP. Can also catalyze the reverse reaction. This Desulfitobacterium hafniense (strain Y51) protein is Acetate kinase.